We begin with the raw amino-acid sequence, 1021 residues long: Collagenase ColH (1021 aa).

The N-terminal stretch at Met-1 to Ala-30 is a signal peptide. A propeptide spanning residues Ala-31–Ala-40 is cleaved from the precursor. An activator domain region spans residues Val-41–Asp-320. The segment at Val-41–Leu-717 is S1 metalloprotease domain. The interval Pro-330–Asn-601 is catalytic subdomain. Asp-421 lines the Zn(2+) pocket. Residue Glu-430 participates in Ca(2+) binding. A Zn(2+)-binding site is contributed by His-455. Glu-456 is a catalytic residue. His-459 contacts Zn(2+). The Ca(2+) site is built by Gly-463, Val-467, and Gly-469. Position 487 (Glu-487) interacts with Zn(2+). The interval Asp-609–Gly-721 is helper subdomain. The tract at residues Pro-718 to Asp-810 is S2a domain. Positions 725, 726, 753, 755, 794, 814, 815, 842, 844, 884, 908, 910, 912, 913, 931, 937, 938, and 939 each coordinate Ca(2+). One can recognise a PKD 1 domain in the interval Leu-727–Ile-808. The tract at residues Leu-811–Pro-904 is S2b domain. The region spanning Leu-816–Ile-905 is the PKD 2 domain. The interval Tyr-903 to Ile-922 is disordered. The tract at residues Ile-905–Arg-1021 is S3 collagen-binding domain. The collagen-binding stretch occupies residues Tyr-1002 to Phe-1004.

This sequence belongs to the peptidase M9B family. Collagenase subfamily. Requires Ca(2+) as cofactor. It depends on Zn(2+) as a cofactor. In terms of processing, upon purification gives rise to 98 kDa, 105 kDa and 116 kDa (full-length) proteins, all of which have the same N-terminus.

Its subcellular location is the secreted. The catalysed reaction is Digestion of native collagen in the triple helical region at Xaa-|-Gly bonds. With synthetic peptides, a preference is shown for Gly at P3 and P1', Pro and Ala at P2 and P2', and hydroxyproline, Ala or Arg at P3'.. With respect to regulation, inhibited by EDTA. Inhibited by 1-10-phenanthroline. Inhibited by broad-spectrum zinc metalloprotease inhibitor batimastat. N-aryl mercaptoacetamide-based inhibitors have been isolated that act on clostridial collagenases with submicromolar affinity while having negligibile activity on human collagenases. Its function is as follows. Clostridial collagenases are among the most efficient degraders of eukaryotic collagen known; saprophytes use collagen as a carbon source while pathogens additionally digest collagen to aid in host colonization. Has both tripeptidylcarboxypeptidase on Gly-X-Y and endopeptidase activities; the endopeptidase cuts within the triple helix region of collagen while tripeptidylcarboxypeptidase successively digests the exposed ends, thus clostridial collagenases can digest large sections of collagen. The full-length protein has collagenase activity, while both the 116 kDa and 98 kDa forms act on gelatin. In vitro digestion of soluble calf skin collagen fibrils requires both ColG and ColH; ColG forms missing the second collagen-binding domain is also synergistic with ColH, although their overall efficiency is decreased. Digestion of collagen requires Ca(2+) and is inhibited by EDTA. The activator domain (residues 119-388) and catalytic subdomain (330-601) open and close around substrate allowing digestion when the protein is closed. In Hathewaya histolytica (Clostridium histolyticum), this protein is Collagenase ColH.